The sequence spans 422 residues: 3-carboxy-cis,cis-muconate cycloisomerase (422 aa).

Belongs to the class-II fumarase/aspartase family. Homotetramer.

Its subcellular location is the cytoplasm. The enzyme catalyses 2-(carboxymethyl)-5-oxo-2,5-dihydro-2-furoate = 3-carboxy-cis,cis-muconate + H(+). It functions in the pathway aromatic compound metabolism; beta-ketoadipate pathway; 5-oxo-4,5-dihydro-2-furylacetate from 3-carboxy-cis,cis-muconate: step 1/2. Catalyzes an anti cycloisomerization. In Pseudomonas putida (Arthrobacter siderocapsulatus), this protein is 3-carboxy-cis,cis-muconate cycloisomerase (pcaB).